The chain runs to 115 residues: uncharacterized protein (115 aa).

This is an uncharacterized protein from Acanthamoeba polyphaga (Amoeba).